The following is a 308-amino-acid chain: Ornithine carbamoyltransferase (308 aa).

Residues 56–59 (STRT), Gln-83, Arg-107, and 134–137 (HPCQ) each bind carbamoyl phosphate. L-ornithine is bound by residues Asn-165, Asp-225, and 229–230 (SM). Residues 266-267 (CL) and Arg-294 contribute to the carbamoyl phosphate site.

The protein belongs to the aspartate/ornithine carbamoyltransferase superfamily. OTCase family.

It localises to the cytoplasm. The catalysed reaction is carbamoyl phosphate + L-ornithine = L-citrulline + phosphate + H(+). It functions in the pathway amino-acid degradation; L-arginine degradation via ADI pathway; carbamoyl phosphate from L-arginine: step 2/2. Reversibly catalyzes the transfer of the carbamoyl group from carbamoyl phosphate (CP) to the N(epsilon) atom of ornithine (ORN) to produce L-citrulline. This chain is Ornithine carbamoyltransferase, found in Cereibacter sphaeroides (strain KD131 / KCTC 12085) (Rhodobacter sphaeroides).